The primary structure comprises 542 residues: Chaperonin GroEL 2 (542 aa).

ATP is bound by residues 30–33, lysine 51, 87–91, glycine 415, and aspartate 496; these read TLGP and DGTTT. The disordered stretch occupies residues 523–542; that stretch reads AEKPKKDGQPQMPPAPGMDF. The segment covering 533–542 has biased composition (pro residues); that stretch reads QMPPAPGMDF.

This sequence belongs to the chaperonin (HSP60) family. Forms a cylinder of 14 subunits composed of two heptameric rings stacked back-to-back. Interacts with the co-chaperonin GroES.

The protein resides in the cytoplasm. It carries out the reaction ATP + H2O + a folded polypeptide = ADP + phosphate + an unfolded polypeptide.. Its function is as follows. Together with its co-chaperonin GroES, plays an essential role in assisting protein folding. The GroEL-GroES system forms a nano-cage that allows encapsulation of the non-native substrate proteins and provides a physical environment optimized to promote and accelerate protein folding. The polypeptide is Chaperonin GroEL 2 (Sinorhizobium medicae (strain WSM419) (Ensifer medicae)).